We begin with the raw amino-acid sequence, 124 residues long: Small ribosomal subunit protein uS12 (124 aa).

At D89 the chain carries 3-methylthioaspartic acid. The disordered stretch occupies residues 103–124; it reads DTAGVKDRRQSRSKYGAKSPKE.

The protein belongs to the universal ribosomal protein uS12 family. Part of the 30S ribosomal subunit. Contacts proteins S8 and S17. May interact with IF1 in the 30S initiation complex.

With S4 and S5 plays an important role in translational accuracy. Functionally, interacts with and stabilizes bases of the 16S rRNA that are involved in tRNA selection in the A site and with the mRNA backbone. Located at the interface of the 30S and 50S subunits, it traverses the body of the 30S subunit contacting proteins on the other side and probably holding the rRNA structure together. The combined cluster of proteins S8, S12 and S17 appears to hold together the shoulder and platform of the 30S subunit. In Prochlorococcus marinus (strain NATL1A), this protein is Small ribosomal subunit protein uS12.